We begin with the raw amino-acid sequence, 391 residues long: Methyltransferase/ribosomally synthesized type I borosin cyclic peptide precursor cmaMA (391 aa).

Positions 1 to 253 are methyltransferase domain; sequence MDATANPKAG…TISTFYLPPK (253 aa). Active-site residues include arginine 72, tyrosine 76, and tyrosine 98. S-adenosyl-L-methionine is bound by residues tyrosine 98, histidine 100, valine 103, alanine 130, glutamine 172, alanine 215, serine 246, and threonine 247. The segment at 254-373 is clasp domain; the sequence is APSAKVSLNR…AQLSGALKEG (120 aa). A precursor leader region spans residues 374–376; the sequence is GVP. An N-methylleucine modification is found at leucine 382. Phenylalanine 385 and phenylalanine 386 each carry N-methylphenylalanine. Isoleucine 387 and isoleucine 388 each carry N-methylisoleucine.

This sequence in the N-terminal section; belongs to the precorrin methyltransferase family. As to quaternary structure, homodimer. In terms of processing, cmaMA automethylates at Leu-382, Phe-385, Phe-386, Ile-387 and Ile-388 before being processed by the prolyloligopeptidase ledP which likely forms a peptidyl ester upon removal of the follower propeptide, which then undergoes macrocyclization with the N-terminus of the modified core peptide. Peptide backbone alpha-N-methylations change the physicochemical properties of amide bonds to provide structural constraints and other favorable characteristics including biological membrane permeability to peptides.

It participates in secondary metabolite biosynthesis. Fusion protein of the methyltransferase cmaM and a type I borosin core peptide; part of the gene cluster that mediates the biosynthesis of a type I borosin, a highly methylated cyclic peptide with potent biological activities. Type I borosins derive from the C-terminus of the fusion protein, and it is the same protein that methylates its own C-terminus using S-adenosyl methionine (SAM). The C-terminus is subsequently cleaved off and macrocyclized by a prolyloligopeptidase to give the final product. The polypeptide is Methyltransferase/ribosomally synthesized type I borosin cyclic peptide precursor cmaMA (Coprinopsis marcescibilis (Agaric fungus)).